The sequence spans 282 residues: Probable endonuclease 4 (282 aa).

H66, H106, E143, D177, H180, H214, D227, H229, and E259 together coordinate Zn(2+).

Belongs to the AP endonuclease 2 family. It depends on Zn(2+) as a cofactor.

The catalysed reaction is Endonucleolytic cleavage to 5'-phosphooligonucleotide end-products.. Endonuclease IV plays a role in DNA repair. It cleaves phosphodiester bonds at apurinic or apyrimidinic (AP) sites, generating a 3'-hydroxyl group and a 5'-terminal sugar phosphate. This Nitratidesulfovibrio vulgaris (strain ATCC 29579 / DSM 644 / CCUG 34227 / NCIMB 8303 / VKM B-1760 / Hildenborough) (Desulfovibrio vulgaris) protein is Probable endonuclease 4.